Consider the following 739-residue polypeptide: Nuclear pore complex protein NUP62 (739 aa).

19 tandem repeats follow at residues 6–7 (FG), 17–18 (FG), 50–51 (FG), 52–53 (FG), 68–69 (FG), 70–71 (FG), 78–79 (FG), 80–81 (FG), 91–92 (FG), 93–94 (FG), 108–109 (FG), 110–111 (FG), 124–125 (FG), 141–142 (FG), 159–160 (FG), 174–175 (FG), 186–187 (FG), 207–208 (FG), and 221–222 (FG). A 26 X 2 AA repeats of F-G region spans residues 6 to 450 (FGQSNSVGGF…AATFSTTGFG (445 aa)). Residues 18-67 (GSSSATNSSSASSTTSPLSFSFNQSSNPSSTGFGFGSSVSSTPASSTTPS) are disordered. Low complexity predominate over residues 79 to 218 (GFGSSASSST…ASSSAATSTS (140 aa)). The tract at residues 79–245 (GFGSSASSST…VASSAPGSSS (167 aa)) is disordered. Positions 232 to 245 (PSFSVASSAPGSSS) are enriched in low complexity. 5 consecutive repeat copies span residues 248 to 249 (FG), 271 to 272 (FG), 280 to 281 (FG), 308 to 309 (FG), and 366 to 367 (FG). 3 disordered regions span residues 281 to 329 (GSSS…ASPF), 341 to 366 (TASS…SFSF), and 399 to 418 (TTTS…SAPA). A run of 2 repeats spans residues 426–427 (FG) and 449–450 (FG). A disordered region spans residues 471–533 (KTSTPASSSQ…AVAPVAGSPK (63 aa)). A compositionally biased stretch (low complexity) spans 472–519 (TSTPASSSQPQTTSPAFSFSLPSSTSTTAPATSSATTTQTTLVVPSSS). Residues 584–674 (RLEIEVAKVV…IRSIIQSVNA (91 aa)) are a coiled coil.

It belongs to the nucleoporin NSP1/NUP62 family. As to quaternary structure, part of the nuclear pore complex (NPC). The NPC has an eight-fold symmetrical structure comprising a central transport channel and two rings, the cytoplasmic and nuclear rings, to which eight filaments are attached. The cytoplasmic filaments have loose ends, while the nuclear filaments are joined in a distal ring, forming a nuclear basket. NPCs are highly dynamic in configuration and composition, and can be devided in 3 subcomplexes, the NUP62 subcomplex, the NUP107-160 subcomplex and the NUP93 subcomplex, containing approximately 30 different nucleoporin proteins. Interacts with NUP58 and the importin KPNB1.

The protein localises to the nucleus envelope. Its subcellular location is the nucleus. It localises to the nuclear pore complex. This chain is Nuclear pore complex protein NUP62, found in Arabidopsis thaliana (Mouse-ear cress).